A 102-amino-acid chain; its full sequence is Small ribosomal subunit protein uS10 (102 aa).

The protein belongs to the universal ribosomal protein uS10 family. Part of the 30S ribosomal subunit.

Functionally, involved in the binding of tRNA to the ribosomes. The polypeptide is Small ribosomal subunit protein uS10 (Cenarchaeum symbiosum (strain A)).